Consider the following 98-residue polypeptide: Acylphosphatase (98 aa).

The Acylphosphatase-like domain occupies 12-98 (TYYVRVRGVV…ERRFERFQQQ (87 aa)). Residues arginine 27 and asparagine 45 contribute to the active site.

The protein belongs to the acylphosphatase family.

It catalyses the reaction an acyl phosphate + H2O = a carboxylate + phosphate + H(+). This Burkholderia lata (strain ATCC 17760 / DSM 23089 / LMG 22485 / NCIMB 9086 / R18194 / 383) protein is Acylphosphatase (acyP).